A 377-amino-acid polypeptide reads, in one-letter code: Palmitoyltransferase PFA3 (377 aa).

Residues 1-31 (MATNNNNNNGNPILRSLETSCCFLATLFPKV) are Cytoplasmic-facing. Residues 32-52 (FCTLVLTWSLYVLLFIIPNYI) form a helical membrane-spanning segment. The Lumenal segment spans residues 53–62 (KSSLNSTILN). Residues 63 to 83 (IIGITLYVLCIISYYKIILIG) traverse the membrane as a helical segment. At 84–181 (PGSPLDYPEL…STCIGFHNYK (98 aa)) the chain is on the cytoplasmic side. The DHHC domain occupies 138-188 (RYCTKCSVWKPDRSHHCSSSGKCILKMDHYCPWFSTCIGFHNYKFFIQFLS). The active-site S-palmitoyl cysteine intermediate is the Cys168. A helical transmembrane segment spans residues 182–202 (FFIQFLSYVAIYCWFLFIISG). At 203 to 222 (KILYNFITEGLFEDEILSLN) the chain is on the lumenal side. Residues 223 to 243 (LVAVLILSFAFAIAVSVFAMF) traverse the membrane as a helical segment. The Cytoplasmic segment spans residues 244 to 377 (SIYLCCKNLT…LRRERQANIV (134 aa)).

Belongs to the DHHC palmitoyltransferase family. PFA3 subfamily. Post-translationally, autopalmitoylated.

Its subcellular location is the vacuole membrane. The catalysed reaction is L-cysteinyl-[protein] + hexadecanoyl-CoA = S-hexadecanoyl-L-cysteinyl-[protein] + CoA. Palmitoyltransferase specific for VAC8. Palmitoylates VAC8 at one or more of its N-terminal cysteine residues, which is required for its proper membrane localization. The protein is Palmitoyltransferase PFA3 (PFA3) of Candida albicans (strain SC5314 / ATCC MYA-2876) (Yeast).